The sequence spans 484 residues: tRNA-2-methylthio-N(6)-dimethylallyladenosine synthase (484 aa).

Positions 29–149 (GVFHIHTLGC…LPKLLDQNRA (121 aa)) constitute an MTTase N-terminal domain. Positions 38, 78, 112, 186, 190, and 193 each coordinate [4Fe-4S] cluster. In terms of domain architecture, Radical SAM core spans 172 to 401 (RASRISSWVA…VALQEQITEE (230 aa)). A TRAM domain is found at 404–474 (ATFEGRDVEV…RHNLLADPDV (71 aa)).

Belongs to the methylthiotransferase family. MiaB subfamily. As to quaternary structure, monomer. It depends on [4Fe-4S] cluster as a cofactor.

It localises to the cytoplasm. It catalyses the reaction N(6)-dimethylallyladenosine(37) in tRNA + (sulfur carrier)-SH + AH2 + 2 S-adenosyl-L-methionine = 2-methylsulfanyl-N(6)-dimethylallyladenosine(37) in tRNA + (sulfur carrier)-H + 5'-deoxyadenosine + L-methionine + A + S-adenosyl-L-homocysteine + 2 H(+). Catalyzes the methylthiolation of N6-(dimethylallyl)adenosine (i(6)A), leading to the formation of 2-methylthio-N6-(dimethylallyl)adenosine (ms(2)i(6)A) at position 37 in tRNAs that read codons beginning with uridine. The protein is tRNA-2-methylthio-N(6)-dimethylallyladenosine synthase of Bifidobacterium longum subsp. infantis (strain ATCC 15697 / DSM 20088 / JCM 1222 / NCTC 11817 / S12).